Reading from the N-terminus, the 140-residue chain is Protein S40-1 (140 aa).

The segment at 16–58 (YFPIRRREDGNEKENNRPVDFRENSERVWNKSSRRSKTTPLPS) is disordered. Over residues 20 to 44 (RRREDGNEKENNRPVDFRENSERVW) the composition is skewed to basic and acidic residues.

It belongs to the senescence regulator S40 family.

Its subcellular location is the cytoplasm. The sequence is that of Protein S40-1 from Arabidopsis thaliana (Mouse-ear cress).